The primary structure comprises 81 residues: ATP synthase subunit c, chloroplastic (81 aa).

A run of 2 helical transmembrane segments spans residues 7-27 (AASVIAAGLAVGLASIGPGVG) and 57-77 (LAFMEALTIYGLVVALALLFA).

The protein belongs to the ATPase C chain family. As to quaternary structure, F-type ATPases have 2 components, F(1) - the catalytic core - and F(0) - the membrane proton channel. F(1) has five subunits: alpha(3), beta(3), gamma(1), delta(1), epsilon(1). F(0) has four main subunits: a(1), b(1), b'(1) and c(10-14). The alpha and beta chains form an alternating ring which encloses part of the gamma chain. F(1) is attached to F(0) by a central stalk formed by the gamma and epsilon chains, while a peripheral stalk is formed by the delta, b and b' chains.

Its subcellular location is the plastid. The protein resides in the chloroplast thylakoid membrane. Functionally, f(1)F(0) ATP synthase produces ATP from ADP in the presence of a proton or sodium gradient. F-type ATPases consist of two structural domains, F(1) containing the extramembraneous catalytic core and F(0) containing the membrane proton channel, linked together by a central stalk and a peripheral stalk. During catalysis, ATP synthesis in the catalytic domain of F(1) is coupled via a rotary mechanism of the central stalk subunits to proton translocation. Key component of the F(0) channel; it plays a direct role in translocation across the membrane. A homomeric c-ring of between 10-14 subunits forms the central stalk rotor element with the F(1) delta and epsilon subunits. This is ATP synthase subunit c, chloroplastic from Arabis hirsuta (Hairy rock-cress).